Consider the following 340-residue polypeptide: 4-hydroxy-3-methylbut-2-enyl diphosphate reductase (340 aa).

Cys-21 serves as a coordination point for [4Fe-4S] cluster. (2E)-4-hydroxy-3-methylbut-2-enyl diphosphate is bound by residues His-50 and His-83. Positions 50 and 83 each coordinate dimethylallyl diphosphate. Residues His-50 and His-83 each coordinate isopentenyl diphosphate. [4Fe-4S] cluster is bound at residue Cys-105. A (2E)-4-hydroxy-3-methylbut-2-enyl diphosphate-binding site is contributed by His-133. A dimethylallyl diphosphate-binding site is contributed by His-133. His-133 provides a ligand contact to isopentenyl diphosphate. Residue Glu-135 is the Proton donor of the active site. Residue Thr-173 coordinates (2E)-4-hydroxy-3-methylbut-2-enyl diphosphate. Cys-203 contacts [4Fe-4S] cluster. Residues Ser-231, Ser-232, Asn-233, and Ser-276 each contribute to the (2E)-4-hydroxy-3-methylbut-2-enyl diphosphate site. Ser-231, Ser-232, Asn-233, and Ser-276 together coordinate dimethylallyl diphosphate. Ser-231, Ser-232, Asn-233, and Ser-276 together coordinate isopentenyl diphosphate. A disordered region spans residues 320–340; it reads KARGEPLTRSATAGDRMNADR.

It belongs to the IspH family. It depends on [4Fe-4S] cluster as a cofactor.

It catalyses the reaction isopentenyl diphosphate + 2 oxidized [2Fe-2S]-[ferredoxin] + H2O = (2E)-4-hydroxy-3-methylbut-2-enyl diphosphate + 2 reduced [2Fe-2S]-[ferredoxin] + 2 H(+). The catalysed reaction is dimethylallyl diphosphate + 2 oxidized [2Fe-2S]-[ferredoxin] + H2O = (2E)-4-hydroxy-3-methylbut-2-enyl diphosphate + 2 reduced [2Fe-2S]-[ferredoxin] + 2 H(+). The protein operates within isoprenoid biosynthesis; dimethylallyl diphosphate biosynthesis; dimethylallyl diphosphate from (2E)-4-hydroxy-3-methylbutenyl diphosphate: step 1/1. It functions in the pathway isoprenoid biosynthesis; isopentenyl diphosphate biosynthesis via DXP pathway; isopentenyl diphosphate from 1-deoxy-D-xylulose 5-phosphate: step 6/6. Its function is as follows. Catalyzes the conversion of 1-hydroxy-2-methyl-2-(E)-butenyl 4-diphosphate (HMBPP) into a mixture of isopentenyl diphosphate (IPP) and dimethylallyl diphosphate (DMAPP). Acts in the terminal step of the DOXP/MEP pathway for isoprenoid precursor biosynthesis. The protein is 4-hydroxy-3-methylbut-2-enyl diphosphate reductase of Acidothermus cellulolyticus (strain ATCC 43068 / DSM 8971 / 11B).